The primary structure comprises 355 residues: MQVSDFHFDLPDELIARYPMTERTASRLLQLDGQTGALRHGQFVDVLDQLNPGDLLVFNNTRVIPARMFGQKASGGKLEVLVERMLDEHSVLAHVRSSKSPKPGTRLILDGGADGEKVEAEMRARHDALFEIHFLDPRPVLEILEAIGHMPLPPYIDRPDEDADKERYQTVYNQKPGAVAAPTAGLHFDEPLLEKIRAKGVETAFVTLHVGAGTFQPVRVDKIEDHHMHSEYAEVPQEVVDAIAATRARGGRVIAVGTTSVRSLESAAKVTLAQGKPLAPFFSDTDIFIFPGYQFQVVDAMVTNFHLPESTLIMLVSAFAGYDNVMSAYQAAVAEQYRFFSYGDAMFVTRRRAQA.

The protein belongs to the QueA family. As to quaternary structure, monomer.

It localises to the cytoplasm. The enzyme catalyses 7-aminomethyl-7-carbaguanosine(34) in tRNA + S-adenosyl-L-methionine = epoxyqueuosine(34) in tRNA + adenine + L-methionine + 2 H(+). It functions in the pathway tRNA modification; tRNA-queuosine biosynthesis. Functionally, transfers and isomerizes the ribose moiety from AdoMet to the 7-aminomethyl group of 7-deazaguanine (preQ1-tRNA) to give epoxyqueuosine (oQ-tRNA). The chain is S-adenosylmethionine:tRNA ribosyltransferase-isomerase from Aeromonas hydrophila subsp. hydrophila (strain ATCC 7966 / DSM 30187 / BCRC 13018 / CCUG 14551 / JCM 1027 / KCTC 2358 / NCIMB 9240 / NCTC 8049).